The primary structure comprises 194 residues: Small ribosomal subunit protein uS4c (194 aa).

The region spanning 84-144 (MRLDTLLYRT…KEILKSLNDK (61 aa)) is the S4 RNA-binding domain.

This sequence belongs to the universal ribosomal protein uS4 family. As to quaternary structure, part of the 30S ribosomal subunit. Contacts protein S5. The interaction surface between S4 and S5 is involved in control of translational fidelity.

It localises to the plastid. It is found in the chloroplast. One of the primary rRNA binding proteins, it binds directly to 16S rRNA where it nucleates assembly of the body of the 30S subunit. In terms of biological role, with S5 and S12 plays an important role in translational accuracy. This is Small ribosomal subunit protein uS4c (rps4) from Bigelowiella natans (Pedinomonas minutissima).